A 224-amino-acid polypeptide reads, in one-letter code: Ribonuclease 3 (224 aa).

The 124-residue stretch at 4–127 folds into the RNase III domain; that stretch reads YSKLEKCLDY…IMGAIYLESG (124 aa). Glutamate 40 contributes to the Mg(2+) binding site. The active site involves aspartate 44. The Mg(2+) site is built by aspartate 113 and glutamate 116. The active site involves glutamate 116. Residues 154 to 223 form the DRBM domain; the sequence is DYKTALQEIT…AKIAIDKLKE (70 aa).

The protein belongs to the ribonuclease III family. As to quaternary structure, homodimer. The cofactor is Mg(2+).

The protein resides in the cytoplasm. The enzyme catalyses Endonucleolytic cleavage to 5'-phosphomonoester.. Functionally, digests double-stranded RNA. Involved in the processing of primary rRNA transcript to yield the immediate precursors to the large and small rRNAs (23S and 16S). Processes some mRNAs, and tRNAs when they are encoded in the rRNA operon. Processes pre-crRNA and tracrRNA of type II CRISPR loci if present in the organism. This is Ribonuclease 3 from Aliarcobacter butzleri (strain RM4018) (Arcobacter butzleri).